The sequence spans 448 residues: Exodeoxyribonuclease 7 large subunit (448 aa).

It belongs to the XseA family. Heterooligomer composed of large and small subunits.

Its subcellular location is the cytoplasm. The catalysed reaction is Exonucleolytic cleavage in either 5'- to 3'- or 3'- to 5'-direction to yield nucleoside 5'-phosphates.. Bidirectionally degrades single-stranded DNA into large acid-insoluble oligonucleotides, which are then degraded further into small acid-soluble oligonucleotides. The protein is Exodeoxyribonuclease 7 large subunit of Shewanella sp. (strain MR-7).